A 450-amino-acid polypeptide reads, in one-letter code: Phosphoglucosamine mutase (450 aa).

Residue S102 is the Phosphoserine intermediate of the active site. Residues S102, D244, D246, and D248 each coordinate Mg(2+). Position 102 is a phosphoserine (S102).

Belongs to the phosphohexose mutase family. Mg(2+) is required as a cofactor. Activated by phosphorylation.

It catalyses the reaction alpha-D-glucosamine 1-phosphate = D-glucosamine 6-phosphate. Functionally, catalyzes the conversion of glucosamine-6-phosphate to glucosamine-1-phosphate. This is Phosphoglucosamine mutase from Bartonella bacilliformis (strain ATCC 35685 / KC583 / Herrer 020/F12,63).